The sequence spans 410 residues: Lissencephaly-1 homolog A (410 aa).

The region spanning 7–39 (QRDELNRAIADYLRSNGYEEAYSVFKKEAELDM) is the LisH domain. A coiled-coil region spans residues 56–83 (TSVIRLQKKVMELESKLNEAKEEINIGG). WD repeat units lie at residues 106–145 (GHRS…FERT), 148–187 (GHTD…CIRT), 190–229 (GHDH…CVKT), 232–271 (GHRE…CKAE), 274–333 (EHEH…CLMT), 336–375 (GHDN…CTKT), and 378–410 (AHEH…WECR).

It belongs to the WD repeat LIS1/nudF family. In terms of assembly, can self-associate. Component of the cytosolic PAF-AH (I) heterotetrameric enzyme, which is composed of PAFAH1B1 (beta), PAFAH1B2 (alpha2) and PAFAH1B3 (alpha1) subunits. The catalytic activity of the enzyme resides in the alpha1 (PAFAH1B3) and alpha2 (PAFAH1B2) subunits, whereas the beta subunit (PAFAH1B1) has regulatory activity. Trimer formation is not essential for the catalytic activity. Interacts with dynein, dynactin, nde1 and ndel1.

It localises to the cytoplasm. The protein localises to the cytoskeleton. Its subcellular location is the microtubule organizing center. The protein resides in the centrosome. Regulatory subunit (beta subunit) of the cytosolic type I platelet-activating factor (PAF) acetylhydrolase (PAF-AH (I)), an enzyme that catalyzes the hydrolyze of the acetyl group at the sn-2 position of PAF and its analogs and participates in PAF inactivation. Regulates the PAF-AH (I) activity in a catalytic dimer composition-dependent manner. Positively regulates the activity of the minus-end directed microtubule motor protein dynein. May enhance dynein-mediated microtubule sliding by targeting dynein to the microtubule plus end. Required for several dynein- and microtubule-dependent processes such as the maintenance of Golgi integrity, the peripheral transport of microtubule fragments and the coupling of the nucleus and centrosome. May be required for proliferation of neuronal precursors and neuronal migration. This is Lissencephaly-1 homolog A (pafah1b1a) from Danio rerio (Zebrafish).